The chain runs to 2184 residues: MADPIMDLFDDPNLFGLDSLTGDSFGRDGPDTIDDALGLGNVLGPLEPITDRVGLPGADVGNNEVKQQTESQVLPDNPALMSATEIMQPIQLPTNQETLNQGNPFMGASNAGAPKIMILKAPAGMTVGACPVTQIQTLTPHQAANGGKVAFAKVLTGTPLRPGVSIVSGNTVLAKMPSTGVAGQVGAVRPVRQLLLQPVRASAAPGSSESNTGIKPAITLTSAPQQGDPKRITLVLQQPSQVGATAQQGQRHVVLGGLPGKIVLQGNQLAALTQAKTPQGQPAKVVTIQLQVQQQPGAAGQTPQKFQIVQQAPGGVAIAPSGQHTHMLNQQGVQRLSVPLKVVLQPQAGSSQGTAQGLSVVKVLNASEVANLTASQTVVKTSTGGGESRKLDSQKKQEKANRIVAEAIARARARGEQNIPRVLNEDELPSVNPEDDDGSRRKRKKKKGETSDRSKDEKPKKVKGSGSLRSRSKGKPSTITPIVGKKRKRNPSSDNSDAEIMASQASPAEDEDSVQKRRSNRQVKRKKYTEDLDIKITDDEDDEEVDVTGPVKTEPVLLPEPMPLPDSEAVPSMQFFVENPSEEDAAIVDKILSMRLAKKELPTGEYVEVEEYFVKYKNYSYLHCEWATIEQLERDKRIHQKLKRFKTKMTQMQHFLQEDEESFNPDYVEVDRILDESHSTDKDNGEPVVYYLVKWCSLPYEDSTWELKEDVDDGKIEEFKRIEARQPNLKRVARPAATSWKKLELSREYQNGNQLREYQLEGVNWLLFNWYNRQNCILADEMGLGKTIQSITFLQEVYNVGIRGPFLVIAPLSTITNWEREFGSWTQMNTIVYHGSLASRQMIQQYEMYCKDSKGRLIPGAYKFDALITTFEMVLSDCPELREIEWRCVIIDEAHRLKNRNCKLLDSLKHMDLEHKVLLTGTPLQNTVEELFSLLHFLEPTQFSSEAEFLKDFGDLKTEEQVQKLQAILKPMMLRRLKEDVEKNLAPKQETIIEVELTNIQKKYYRAILEKNFSFLTKGASQSNTPNLLNTMMELRKCCNHPYLITGAEEKIISEFREATPVVPPDFHVQAMVRSSGKLVLIDKLLPKLRAGGHKVLIFSQMVRCLDILEDYLIQRRYLYERIDGRVRGNMRQAAIDRFSRPDSDRFVFLLCTRAGGLGINLTAADTCIIFDSDWNPQNDLQAQARCHRIGQSKAVKIYRLITRNSYEREMFDKASLKLGLDKAVLQSMSGRDNHLSGPIQQFTKKEIEDLLRKGAYAAIMDEDDEGSKFCEEDIDQILLRRTTTITIESEGKGSTFSKASFVASENRTDISLDDPNFWQKWAKKADLDLDLLSSKNTLVIDTPRIRKQTRHFTNKDDDMVEFSDLESDDDDRPKARRQDRKHGYGRTDCFRVEKHLLVYGWGRWRDILTHGRFKRGMNERDVEKICRAILVYCLLHYRGDENIKSFIWDLITPAENGKTKQLQNHSGLSIPVPRGRKGKKVKSQSSFDIHKADWIHKYNPDTLFQDEGYKKHLKHQCNKVLLRVRMLYFLRQEVIGNQAMKVLSGVEARQIDIWFPQVDQVEVPSRWWDREADKSLLIGVFKHGYEKYNTMRADPALCFLEKVGGPDEQAIAAEHHAQDFSELPDGGDFDRDIEDPEYKPLHAQKDPEDEIDSLMMDEEISVVDGEEATAMPSGMLWPPGSALTARLRRLITAYQRSYKREQLKLEAEERGDKRRKRCEAAFKLKEIARREKQQRWTRREACDFFRVLSSFGVEYDPDTQLYDWQRFRGLARLDKKTDESLLKYFHGFVAMCRQVCRLPPAAGDEPPDPSLFIEPISEERASRALFRLDLLRRVREQVLCHPLLIPRLSLCRPDPELPEWWESGRHDNELLQGAARYGLSRTDLTILQDHAFSFLRCQISYFQSRGISGHSRPSTPTTAPSVPTERQPSHLASLSSSVSCSPAPRRSSSCSSSSHSSNSEDSSDESNGVKVKPNAGLSHARLYDEESRLSLTASPADLTTEDSIQTALETPHSTDWPKDRVLICRIEQVCSAVLTGKWSSPRRLSDPPSDSPDSLPPTPEQQSPAHFTQIRPAPDPKEFTIQIKSEEGLKIKFQKHKFMGNGALDSAPHTQKKKSKKKMDLDMDTRIPVVNQKDGTLLLGEEAPLRCQLPEWLHRNPDFMVDPRFIAVSGYWIPYINRGKHFL.

Disordered stretches follow at residues 379–399 and 419–527; these read VKTS…KQEK and IPRV…KRKK. Over residues 387-399 the composition is skewed to basic and acidic residues; it reads ESRKLDSQKKQEK. Residues 425–437 show a composition bias toward acidic residues; sequence EDELPSVNPEDDD. Positions 448 to 459 are enriched in basic and acidic residues; it reads GETSDRSKDEKP. A compositionally biased stretch (basic residues) spans 516 to 527; the sequence is KRRSNRQVKRKK. Chromo domains follow at residues 586–653 and 668–734; these read AIVD…TQMQ and VEVD…RVAR. Residues 767–941 form the Helicase ATP-binding domain; sequence LFNWYNRQNC…FSLLHFLEPT (175 aa). 780-787 is a binding site for ATP; the sequence is DEMGLGKT. Positions 892–895 match the DEAH box motif; that stretch reads DEAH. The 172-residue stretch at 1081–1252 folds into the Helicase C-terminal domain; sequence LIDKLLPKLR…FTKKEIEDLL (172 aa). Disordered stretches follow at residues 1907–1989 and 2039–2076; these read GISG…EESR and WSSP…PAPD. Low complexity-rich tracts occupy residues 1912 to 1961 and 2040 to 2054; these read SRPS…SNSE and SSPR…DSPD.

Belongs to the SNF2/RAD54 helicase family. CHD8 subfamily. As to quaternary structure, component of some MLL1/MLL complex.

It localises to the nucleus. It catalyses the reaction ATP + H2O = ADP + phosphate + H(+). In terms of biological role, ATP-dependent chromatin-remodeling factor, it slides nucleosomes along DNA; nucleosome sliding requires ATP. Acts as a transcription repressor by remodeling chromatin structure and recruiting histone H1 to target genes. Suppresses p53/tp53-mediated apoptosis by recruiting histone H1 and preventing p53/tp53 transactivation activity. Acts as a negative regulator of Wnt signaling pathway by regulating beta-catenin (ctnnb1) activity. Negatively regulates ctnnb1-targeted gene expression by being recruited specifically to the promoter regions of several ctnnb1 responsive genes. May also act as a transcription activator by participating in efficient U6 RNA polymerase III transcription. The chain is Chromodomain-helicase-DNA-binding protein 8 from Xenopus tropicalis (Western clawed frog).